An 83-amino-acid chain; its full sequence is Small ribosomal subunit protein uS17 (83 aa).

This sequence belongs to the universal ribosomal protein uS17 family. Part of the 30S ribosomal subunit.

In terms of biological role, one of the primary rRNA binding proteins, it binds specifically to the 5'-end of 16S ribosomal RNA. The sequence is that of Small ribosomal subunit protein uS17 from Chlamydia muridarum (strain MoPn / Nigg).